The sequence spans 118 residues: UPF0251 protein TTE1845 (118 aa).

The protein belongs to the UPF0251 family.

This is UPF0251 protein TTE1845 from Caldanaerobacter subterraneus subsp. tengcongensis (strain DSM 15242 / JCM 11007 / NBRC 100824 / MB4) (Thermoanaerobacter tengcongensis).